Reading from the N-terminus, the 208-residue chain is Hemocyanin, units E and F (208 aa).

H1 is a Cu cation binding site. Residues 1-74 (HGLPAQCPNA…HDLESVRGNL (74 aa)) form a unit E region. A disulfide bond links C7 and C18. Residues 19–21 (CLH) constitute a cross-link (2'-(S-cysteinyl)-histidine (Cys-His)). N-linked (GlcNAc...) asparagine glycosylation occurs at N43. The segment at 75 to 208 (VRKNVDRLSL…GHLSLLSPET (134 aa)) is unit F. Residue H113 participates in Cu cation binding. C119 and C130 are oxidised to a cystine. Residues 131 to 133 (CLH) constitute a cross-link (2'-(S-cysteinyl)-histidine (Cys-His)). H133 and H142 together coordinate Cu cation.

This sequence belongs to the tyrosinase family. Hemocyanin subfamily. In terms of assembly, decamers of large identical subunits (390 kDa), each containing 8 globular oxygen-binding functional units. It depends on Cu(2+) as a cofactor.

In terms of biological role, hemocyanins are copper-containing oxygen carriers occurring freely dissolved in the hemolymph of many mollusks and arthropods. The chain is Hemocyanin, units E and F from Sepia officinalis (Common cuttlefish).